Reading from the N-terminus, the 202-residue chain is Outer-membrane lipoprotein carrier protein (202 aa).

The N-terminal stretch at 1 to 18 is a signal peptide; it reads MNKLFLILLLIFSHEVFS.

It belongs to the LolA family. Monomer.

The protein resides in the periplasm. Functionally, participates in the translocation of lipoproteins from the inner membrane to the outer membrane. Only forms a complex with a lipoprotein if the residue after the N-terminal Cys is not an aspartate (The Asp acts as a targeting signal to indicate that the lipoprotein should stay in the inner membrane). The sequence is that of Outer-membrane lipoprotein carrier protein from Legionella pneumophila (strain Corby).